The chain runs to 136 residues: Blasticidin-S acetyltransferase (136 aa).

An N-acetyltransferase domain is found at 1–136 (MLSLPRLQTV…ITSHLLVKEL (136 aa)).

Its function is as follows. Confers resistance to blasticidin S antibiotic. This is Blasticidin-S acetyltransferase (bls) from Streptomyces morookaense (Streptoverticillium morookaense).